The sequence spans 512 residues: Lysine--tRNA ligase (512 aa).

E422 and E429 together coordinate Mg(2+).

Belongs to the class-II aminoacyl-tRNA synthetase family. As to quaternary structure, homodimer. The cofactor is Mg(2+).

It is found in the cytoplasm. It catalyses the reaction tRNA(Lys) + L-lysine + ATP = L-lysyl-tRNA(Lys) + AMP + diphosphate. The polypeptide is Lysine--tRNA ligase (Paraburkholderia phymatum (strain DSM 17167 / CIP 108236 / LMG 21445 / STM815) (Burkholderia phymatum)).